The following is a 121-amino-acid chain: uncharacterized protein (121 aa).

Disordered regions lie at residues methionine 1–aspartate 28 and glutamine 60–leucine 82. 2 positions are modified to phosphoserine: serine 95 and serine 115.

As to expression, expressed in spleen, prostate, testis and uterus.

This is an uncharacterized protein from Homo sapiens (Human).